Consider the following 235-residue polypeptide: Glycerol-3-phosphate acyltransferase (235 aa).

6 consecutive transmembrane segments (helical) span residues 4–24 (LLAI…IMAG), 56–76 (TVTL…VAFF), 94–114 (LLAG…GFKG), 124–144 (MLIG…LLTI), 152–172 (VASM…KYIF), and 191–211 (FHDS…LGIL).

It belongs to the PlsY family. Probably interacts with PlsX.

The protein resides in the cell inner membrane. The enzyme catalyses an acyl phosphate + sn-glycerol 3-phosphate = a 1-acyl-sn-glycero-3-phosphate + phosphate. Its pathway is lipid metabolism; phospholipid metabolism. Catalyzes the transfer of an acyl group from acyl-phosphate (acyl-PO(4)) to glycerol-3-phosphate (G3P) to form lysophosphatidic acid (LPA). This enzyme utilizes acyl-phosphate as fatty acyl donor, but not acyl-CoA or acyl-ACP. The protein is Glycerol-3-phosphate acyltransferase of Chlorobium limicola (strain DSM 245 / NBRC 103803 / 6330).